Consider the following 146-residue polypeptide: ATP synthase epsilon chain (146 aa).

The protein belongs to the ATPase epsilon chain family. In terms of assembly, F-type ATPases have 2 components, CF(1) - the catalytic core - and CF(0) - the membrane proton channel. CF(1) has five subunits: alpha(3), beta(3), gamma(1), delta(1), epsilon(1). CF(0) has three main subunits: a, b and c.

The protein resides in the cell membrane. Functionally, produces ATP from ADP in the presence of a proton gradient across the membrane. The protein is ATP synthase epsilon chain of Lactobacillus helveticus (strain DPC 4571).